Reading from the N-terminus, the 64-residue chain is Small ribosomal subunit protein eS17 (64 aa).

This sequence belongs to the eukaryotic ribosomal protein eS17 family.

The polypeptide is Small ribosomal subunit protein eS17 (Halorubrum lacusprofundi (strain ATCC 49239 / DSM 5036 / JCM 8891 / ACAM 34)).